The chain runs to 400 residues: Subtilisin-like protease 1 (400 aa).

Residues 1–20 (MKFSQSLIALAACFLPLIAA) form the signal peptide. A propeptide spanning residues 21 to 119 (APVEAQHAKI…IEMDGKVQAN (99 aa)) is cleaved from the precursor. The region spanning 42–117 (SYIVVFNKGV…AWIEMDGKVQ (76 aa)) is the Inhibitor I9 domain. N82 carries N-linked (GlcNAc...) asparagine glycosylation. Positions 128–400 (TWGLGRISHK…NLIAYNGNGA (273 aa)) constitute a Peptidase S8 domain. Catalysis depends on charge relay system residues D160, H192, and S345.

Belongs to the peptidase S8 family.

Its subcellular location is the secreted. Functionally, major secreted subtilisin-like serine endopeptidase. Mediates the degradation of collagen, the major structural protein in the mammalian host. Degrades the nonhelical regions of collagen that function in the cross-linking of the helical components. May function as virulence factor involved in epidermal wing necrosis observed in white nose syndrome (WNS) in bats. The polypeptide is Subtilisin-like protease 1 (Pseudogymnoascus destructans (strain ATCC MYA-4855 / 20631-21) (Bat white-nose syndrome fungus)).